The sequence spans 508 residues: Beta-glucosidase 10 (508 aa).

An N-terminal signal peptide occupies residues 1-22 (MKLYSLLSVFLVILLATSDSDA). A beta-D-glucoside is bound by residues Gln-42, His-142, and 187 to 188 (NE). Glu-188 acts as the Proton donor in catalysis. Cysteines 207 and 215 form a disulfide. Residues Asn-214 and Asn-219 are each glycosylated (N-linked (GlcNAc...) asparagine). Residue Tyr-331 coordinates a beta-D-glucoside. The N-linked (GlcNAc...) asparagine glycan is linked to Asn-365. A beta-D-glucoside is bound at residue Glu-398. Glu-398 (nucleophile) is an active-site residue. A glycan (N-linked (GlcNAc...) asparagine) is linked at Asn-431. Residues Trp-441 and Phe-457 each contribute to the a beta-D-glucoside site. Residues Asn-463, Asn-485, and Asn-501 are each glycosylated (N-linked (GlcNAc...) asparagine).

It belongs to the glycosyl hydrolase 1 family.

It carries out the reaction Hydrolysis of terminal, non-reducing beta-D-glucosyl residues with release of beta-D-glucose.. This is Beta-glucosidase 10 from Arabidopsis thaliana (Mouse-ear cress).